We begin with the raw amino-acid sequence, 543 residues long: NXPE family member 4 (543 aa).

An N-terminal signal peptide occupies residues 1-26 (MKTLASRKSLWMLLFIVIFWVSFTVF). Residues asparagine 91, asparagine 159, and asparagine 223 are each glycosylated (N-linked (GlcNAc...) asparagine).

Belongs to the NXPE family.

Its subcellular location is the secreted. The sequence is that of NXPE family member 4 (Nxpe4) from Mus musculus (Mouse).